Here is a 349-residue protein sequence, read N- to C-terminus: DNA polymerase IV (349 aa).

One can recognise a UmuC domain in the interval 7 to 188 (IIHIDMDYFF…LPVKKLFGVG (182 aa)). The Mg(2+) site is built by Asp11 and Asp106. Glu107 is an active-site residue.

Belongs to the DNA polymerase type-Y family. As to quaternary structure, monomer. Mg(2+) is required as a cofactor.

The protein resides in the cytoplasm. The catalysed reaction is DNA(n) + a 2'-deoxyribonucleoside 5'-triphosphate = DNA(n+1) + diphosphate. In terms of biological role, poorly processive, error-prone DNA polymerase involved in untargeted mutagenesis. Copies undamaged DNA at stalled replication forks, which arise in vivo from mismatched or misaligned primer ends. These misaligned primers can be extended by PolIV. Exhibits no 3'-5' exonuclease (proofreading) activity. May be involved in translesional synthesis, in conjunction with the beta clamp from PolIII. The chain is DNA polymerase IV from Francisella tularensis subsp. holarctica (strain OSU18).